A 766-amino-acid chain; its full sequence is NADH-dependent flavin oxidoreductase iliE (766 aa).

Residues 1-13 (MSEQLGSHITTPS) show a composition bias toward polar residues. The disordered stretch occupies residues 1–24 (MSEQLGSHITTPSSHDDASKDKRP). A compositionally biased stretch (basic and acidic residues) spans 14–24 (SHDDASKDKRP). Residue asparagine 30 is glycosylated (N-linked (GlcNAc...) asparagine). 61-64 (AATA) serves as a coordination point for FMN. Residues asparagine 70 and asparagine 136 are each glycosylated (N-linked (GlcNAc...) asparagine). Glutamine 143 contributes to the FMN binding site. Residue 224–227 (HAGH) coordinates substrate. Position 385–386 (385–386 (AR)) interacts with FMN. Residues 551–622 (TPYDILAMRK…SKRSLYDTQG (72 aa)) form the J domain. N-linked (GlcNAc...) asparagine glycosylation is found at asparagine 634, asparagine 650, and asparagine 654. The helical transmembrane segment at 675–695 (MYMSNGVFATLVVMMCMIGAF) threads the bilayer.

Belongs to the NADH:flavin oxidoreductase/NADH oxidase family.

Its subcellular location is the membrane. In terms of biological role, NADH-dependent flavin oxidoreductase; part of the gene cluster that mediates the biosynthesis of ilicicolin H, a 4-hydroxy-2-pyridonealkaloid that has potent and broad antifungal activities by inhibiting the mitochondrial respiration chain. The biosynthesis of ilicicolin H starts with formation of the tetramic acid by the hybrid PKS-NRPS synthetase iliA with the partnering trans-enoyl reductase iliB since iliA lacks a designated enoylreductase (ER) domain. The cytochrome P450 monooxygenase iliC then catalyzes the ring expansion of the tetramate to the acyclic 2-pyridone. The pericyclase iliD further converts the acyclic 2-pyridone into 8-epi-ilicicolin H. 8-epi-ilicicolin H might then spontaneously convert to ilicicolin H since ilicicolin H is produced in the absence of the epimerase iliE, in contrast to what was observed for the Talaromyces variabilis ilicolin H biosynthetic pathway. This is NADH-dependent flavin oxidoreductase iliE from Neonectria sp. (strain DH2).